The following is a 174-amino-acid chain: Ribosome maturation factor RimM (174 aa).

One can recognise a PRC barrel domain in the interval 98 to 172 (AGEYYYHQIV…VVTVELMEGL (75 aa)).

It belongs to the RimM family. In terms of assembly, binds ribosomal protein uS19.

The protein resides in the cytoplasm. Functionally, an accessory protein needed during the final step in the assembly of 30S ribosomal subunit, possibly for assembly of the head region. Essential for efficient processing of 16S rRNA. May be needed both before and after RbfA during the maturation of 16S rRNA. It has affinity for free ribosomal 30S subunits but not for 70S ribosomes. The chain is Ribosome maturation factor RimM from Lactiplantibacillus plantarum (strain ATCC BAA-793 / NCIMB 8826 / WCFS1) (Lactobacillus plantarum).